Consider the following 413-residue polypeptide: Tubby-like F-box protein 6 (413 aa).

The 56-residue stretch at 67–122 (SIWVDLPPELLLDIIQRIESEQSLWPGRRDVVACASVCKSWREMTKEVVKVPELSG) folds into the F-box domain.

It belongs to the TUB family. In terms of tissue distribution, ubiquitous, with higher levels in flowers.

In Arabidopsis thaliana (Mouse-ear cress), this protein is Tubby-like F-box protein 6.